The sequence spans 435 residues: MNIAVVGLSHRTAPVEVREKLSISDDNIPSAFNTLNTNDQIIEVSILSTCNRLEIYSFVKNSDNGVKAIKDFLCKHSGLGIDELDPHLFSYDQAEAVKHVMRVAGGLDSLVLGEGQILSQVKKMVRLGQENHSMGPILNRLLTQAVSTGKRVRSETNLGTGAVSISSAAVELAQLKLGQSEGKDELMSLEREKVSIVGAGRMSRLLIQHLQSKGCSKLKLINRTFQRAEALALDFPDVDIHCQLLDDLDESLRNSTLIFTSTAAENPIIDAARLKEVVRDETLRLIDIGVPRNISSDVKGLTGFEAHDVDDLQEVVSRNQEARQQIALEAEALVDEEGRIFLEWWASLEAVPTINLLRSSLESVRKEELQKALSRMGPDFSARERKVVEALSKGIINKILHTPVTNLRAPQTSSNRKISLEVIETLFELGVSESE.

Residues 49–52 (TCNR), S109, 114–116 (EGQ), and Q120 each bind substrate. The active-site Nucleophile is C50. 198-203 (GAGRMS) is an NADP(+) binding site.

Belongs to the glutamyl-tRNA reductase family. Homodimer.

It catalyses the reaction (S)-4-amino-5-oxopentanoate + tRNA(Glu) + NADP(+) = L-glutamyl-tRNA(Glu) + NADPH + H(+). Its pathway is porphyrin-containing compound metabolism; protoporphyrin-IX biosynthesis; 5-aminolevulinate from L-glutamyl-tRNA(Glu): step 1/2. It functions in the pathway porphyrin-containing compound metabolism; chlorophyll biosynthesis. In terms of biological role, catalyzes the NADPH-dependent reduction of glutamyl-tRNA(Glu) to glutamate 1-semialdehyde (GSA). The chain is Glutamyl-tRNA reductase from Prochlorococcus marinus (strain MIT 9211).